A 171-amino-acid chain; its full sequence is Ribosome maturation factor RimM (171 aa).

Residues 96 to 168 (EDGFYDHELE…TATITPPEGL (73 aa)) enclose the PRC barrel domain.

Belongs to the RimM family. In terms of assembly, binds ribosomal protein uS19.

Its subcellular location is the cytoplasm. Its function is as follows. An accessory protein needed during the final step in the assembly of 30S ribosomal subunit, possibly for assembly of the head region. Essential for efficient processing of 16S rRNA. May be needed both before and after RbfA during the maturation of 16S rRNA. It has affinity for free ribosomal 30S subunits but not for 70S ribosomes. In Corynebacterium glutamicum (strain R), this protein is Ribosome maturation factor RimM.